We begin with the raw amino-acid sequence, 319 residues long: Annexin A4 (319 aa).

T7 carries the post-translational modification Phosphothreonine. Phosphoserine is present on S12. Annexin repeat units lie at residues 14–85 (FNAT…GLMT), 86–157 (PTVL…SLSA), 169–241 (ALMK…AIVK), and 245–316 (SKPS…VLCG). 3 positions are modified to N6-acetyllysine: K213, K293, and K300.

It belongs to the annexin family.

The protein resides in the zymogen granule membrane. Functionally, calcium/phospholipid-binding protein which promotes membrane fusion and is involved in exocytosis. This chain is Annexin A4 (Anxa4), found in Mus musculus (Mouse).